A 329-amino-acid chain; its full sequence is Cytochrome f (329 aa).

The signal sequence occupies residues 1–44; it reads MKRNIIFLVIHQFENLTMKKKQNIFFIFLLTVFFNFTVNSNVSA. Heme contacts are provided by Tyr-45, Cys-65, Cys-68, and His-69. Residues 295 to 315 traverse the membrane as a helical segment; sequence VQGLIIFLITIFITQLFLVLK.

The protein belongs to the cytochrome f family. As to quaternary structure, the 4 large subunits of the cytochrome b6-f complex are cytochrome b6, subunit IV (17 kDa polypeptide, petD), cytochrome f and the Rieske protein, while the 4 small subunits are PetG, PetL, PetM and PetN. The complex functions as a dimer. The cofactor is heme.

It localises to the plastid. The protein resides in the chloroplast thylakoid membrane. Component of the cytochrome b6-f complex, which mediates electron transfer between photosystem II (PSII) and photosystem I (PSI), cyclic electron flow around PSI, and state transitions. This is Cytochrome f from Tupiella akineta (Green alga).